Reading from the N-terminus, the 359-residue chain is 3-dehydroquinate synthase (359 aa).

NAD(+) contacts are provided by residues 70–75, 105–109, 129–130, K142, K151, and 169–172; these read DGEQYK, GVIGD, TT, and FYKT. The Zn(2+) site is built by E184, H247, and H264.

It belongs to the sugar phosphate cyclases superfamily. Dehydroquinate synthase family. The cofactor is Co(2+). Zn(2+) is required as a cofactor. It depends on NAD(+) as a cofactor.

Its subcellular location is the cytoplasm. The enzyme catalyses 7-phospho-2-dehydro-3-deoxy-D-arabino-heptonate = 3-dehydroquinate + phosphate. The protein operates within metabolic intermediate biosynthesis; chorismate biosynthesis; chorismate from D-erythrose 4-phosphate and phosphoenolpyruvate: step 2/7. Its function is as follows. Catalyzes the conversion of 3-deoxy-D-arabino-heptulosonate 7-phosphate (DAHP) to dehydroquinate (DHQ). The polypeptide is 3-dehydroquinate synthase (Francisella tularensis subsp. mediasiatica (strain FSC147)).